The chain runs to 692 residues: Elongation factor G 2 (692 aa).

The 276-residue stretch at 8–283 (EKTRNIGIMA…SVVAYLPSPL (276 aa)) folds into the tr-type G domain. GTP contacts are provided by residues 17–24 (AHIDAGKT), 81–85 (DTPGH), and 135–138 (NKMD).

This sequence belongs to the TRAFAC class translation factor GTPase superfamily. Classic translation factor GTPase family. EF-G/EF-2 subfamily.

Its subcellular location is the cytoplasm. Functionally, catalyzes the GTP-dependent ribosomal translocation step during translation elongation. During this step, the ribosome changes from the pre-translocational (PRE) to the post-translocational (POST) state as the newly formed A-site-bound peptidyl-tRNA and P-site-bound deacylated tRNA move to the P and E sites, respectively. Catalyzes the coordinated movement of the two tRNA molecules, the mRNA and conformational changes in the ribosome. In Geobacter sulfurreducens (strain ATCC 51573 / DSM 12127 / PCA), this protein is Elongation factor G 2.